A 696-amino-acid polypeptide reads, in one-letter code: Mitosis initiation protein fs(1)Ya (696 aa).

Disordered regions lie at residues N245–K285, E336–S379, and I457–I492. Composition is skewed to low complexity over residues Q270 to Q281 and S361 to S379. The interval T448–Q696 is rich in charged AA. Residues T478, T484, and T489 each carry the phosphothreonine modification. 2 short sequence motifs (nuclear localization signal) span residues P512–K520 and Q534–R538. Disordered regions lie at residues D555–A586 and P603–Q696. Acidic residues predominate over residues G557–E569. Composition is skewed to basic and acidic residues over residues R607–N624 and R685–Q696.

The protein localises to the nucleus envelope. Its subcellular location is the nucleus. The protein resides in the nucleoplasm. It localises to the cytoplasm. In terms of biological role, cell cycle-dependent nuclear envelope component required for embryonic mitosis. The protein is Mitosis initiation protein fs(1)Ya (fs(1)Ya) of Drosophila melanogaster (Fruit fly).